Here is a 119-residue protein sequence, read N- to C-terminus: Large ribosomal subunit protein bL19 (119 aa).

Belongs to the bacterial ribosomal protein bL19 family.

Functionally, this protein is located at the 30S-50S ribosomal subunit interface and may play a role in the structure and function of the aminoacyl-tRNA binding site. This chain is Large ribosomal subunit protein bL19, found in Limosilactobacillus reuteri (strain DSM 20016) (Lactobacillus reuteri).